The sequence spans 122 residues: Venom protein 7.1 (122 aa).

Positions 1–19 are cleaved as a signal peptide; that stretch reads MRFSIISASLVLIFANVKA.

Contains 3 disulfide bonds. As to expression, expressed by the venom gland.

The protein localises to the secreted. This chain is Venom protein 7.1, found in Lychas mucronatus (Chinese swimming scorpion).